The sequence spans 522 residues: Tetratricopeptide repeat and J domain-containing co-chaperone DNJ1 (522 aa).

Positions 1 to 22 are cleaved as a signal peptide; it reads MKGFLLVALPVLFLSLSTQVFG. TPR repeat units follow at residues 29–62, 63–96, 97–130, 142–175, 210–243, 256–289, and 356–389; these read AAQI…DPTG, YANY…NPGF, VQAH…KSDS, GEAA…GPNS, TYLP…DPDS, LEKD…LVRF, and VDSW…SGRS. The 62-residue stretch at 410-471 folds into the J domain; the sequence is DYYKVLGVPR…ELRQRYDNGD (62 aa). Positions 465–494 are disordered; that stretch reads QRYDNGDDPNDPTGGQQHNPFAHHGGGMPF.

It localises to the endoplasmic reticulum lumen. Endoplasmic reticulum co-chaperone crucial for survival and virulence factor production at elevated temperatures representative of febrile patients during infection. Contributes to virulence in a mouse model of cryptococcosis. With chaperone CNE1, coordinately maintains ER homeostasis and contributes to maintenance of cell wall architecture. The sequence is that of Tetratricopeptide repeat and J domain-containing co-chaperone DNJ1 from Cryptococcus neoformans var. grubii serotype A (strain H99 / ATCC 208821 / CBS 10515 / FGSC 9487) (Filobasidiella neoformans var. grubii).